We begin with the raw amino-acid sequence, 240 residues long: Probable transcriptional regulatory protein BLi02909/BL01150 (240 aa).

The segment covering M1–K14 has biased composition (basic residues). A disordered region spans residues M1–R21.

Belongs to the TACO1 family.

The protein resides in the cytoplasm. The protein is Probable transcriptional regulatory protein BLi02909/BL01150 of Bacillus licheniformis (strain ATCC 14580 / DSM 13 / JCM 2505 / CCUG 7422 / NBRC 12200 / NCIMB 9375 / NCTC 10341 / NRRL NRS-1264 / Gibson 46).